The sequence spans 246 residues: MQNPCNSTDVYKYALFSVKRNSDFIEFVLRSEIFSNYYNAVNQMMYMLWSFKRPDEQQSLTDNYSNKIHLPSIKNFTLELYKIIIVPFDGDYTKIKCLSYPVHGMYIGSDCIIYLIENVDPSTNCTKFPDEIFAKYVTYRYTQNCDLITLSHNIFGPNITSEEANKISTMIVSDILQSYYKGYKMYYFDNLFTELKYKCHPSDYEKFVRQFIIPKLKKQFEVQNIKGTPLLQKTLDEIYVYMISGY.

This is an uncharacterized protein from Acanthamoeba polyphaga (Amoeba).